Here is a 101-residue protein sequence, read N- to C-terminus: Urease subunit beta (101 aa).

This sequence belongs to the urease beta subunit family. In terms of assembly, heterotrimer of UreA (gamma), UreB (beta) and UreC (alpha) subunits. Three heterotrimers associate to form the active enzyme.

It localises to the cytoplasm. It carries out the reaction urea + 2 H2O + H(+) = hydrogencarbonate + 2 NH4(+). The protein operates within nitrogen metabolism; urea degradation; CO(2) and NH(3) from urea (urease route): step 1/1. In Variovorax paradoxus (strain S110), this protein is Urease subunit beta.